A 602-amino-acid polypeptide reads, in one-letter code: Elongation factor 4 (602 aa).

In terms of domain architecture, tr-type G spans 7–188; that stretch reads ENIRNFSIIA…AIIDLVPPPK (182 aa). GTP-binding positions include 19–24 and 135–138; these read DHGKST and NKID.

The protein belongs to the TRAFAC class translation factor GTPase superfamily. Classic translation factor GTPase family. LepA subfamily.

The protein resides in the cell inner membrane. The catalysed reaction is GTP + H2O = GDP + phosphate + H(+). Functionally, required for accurate and efficient protein synthesis under certain stress conditions. May act as a fidelity factor of the translation reaction, by catalyzing a one-codon backward translocation of tRNAs on improperly translocated ribosomes. Back-translocation proceeds from a post-translocation (POST) complex to a pre-translocation (PRE) complex, thus giving elongation factor G a second chance to translocate the tRNAs correctly. Binds to ribosomes in a GTP-dependent manner. The polypeptide is Elongation factor 4 (Chlamydia pneumoniae (Chlamydophila pneumoniae)).